The primary structure comprises 417 residues: Serine hydroxymethyltransferase (417 aa).

Residues Leu121 and 125 to 127 (GHL) each bind (6S)-5,6,7,8-tetrahydrofolate. Lys230 is subject to N6-(pyridoxal phosphate)lysine. 355–357 (SPF) contributes to the (6S)-5,6,7,8-tetrahydrofolate binding site.

The protein belongs to the SHMT family. As to quaternary structure, homodimer. Requires pyridoxal 5'-phosphate as cofactor.

The protein localises to the cytoplasm. The catalysed reaction is (6R)-5,10-methylene-5,6,7,8-tetrahydrofolate + glycine + H2O = (6S)-5,6,7,8-tetrahydrofolate + L-serine. It functions in the pathway one-carbon metabolism; tetrahydrofolate interconversion. Its pathway is amino-acid biosynthesis; glycine biosynthesis; glycine from L-serine: step 1/1. Catalyzes the reversible interconversion of serine and glycine with tetrahydrofolate (THF) serving as the one-carbon carrier. This reaction serves as the major source of one-carbon groups required for the biosynthesis of purines, thymidylate, methionine, and other important biomolecules. Also exhibits THF-independent aldolase activity toward beta-hydroxyamino acids, producing glycine and aldehydes, via a retro-aldol mechanism. The protein is Serine hydroxymethyltransferase of Legionella pneumophila subsp. pneumophila (strain Philadelphia 1 / ATCC 33152 / DSM 7513).